The primary structure comprises 416 residues: Glutamyl-tRNA reductase (416 aa).

Substrate contacts are provided by residues 49–52, serine 105, 110–112, and glutamine 116; these read TCNR and EPQ. Catalysis depends on cysteine 50, which acts as the Nucleophile. 185 to 190 contributes to the NADP(+) binding site; that stretch reads GAGETI.

It belongs to the glutamyl-tRNA reductase family. As to quaternary structure, homodimer.

The catalysed reaction is (S)-4-amino-5-oxopentanoate + tRNA(Glu) + NADP(+) = L-glutamyl-tRNA(Glu) + NADPH + H(+). Its pathway is porphyrin-containing compound metabolism; protoporphyrin-IX biosynthesis; 5-aminolevulinate from L-glutamyl-tRNA(Glu): step 1/2. Its function is as follows. Catalyzes the NADPH-dependent reduction of glutamyl-tRNA(Glu) to glutamate 1-semialdehyde (GSA). The sequence is that of Glutamyl-tRNA reductase from Shewanella frigidimarina (strain NCIMB 400).